The chain runs to 357 residues: Cinnamyl alcohol dehydrogenase 7 (357 aa).

Cys-46 contacts Zn(2+). An NADP(+)-binding site is contributed by Thr-48. Positions 68, 69, 99, 102, 105, 113, and 162 each coordinate Zn(2+). NADP(+) contacts are provided by residues Thr-166, 187–192 (GLGGLG), 210–215 (STSERK), Thr-250, Gly-274, and 297–299 (SMV).

The protein belongs to the zinc-containing alcohol dehydrogenase family. Homodimer. Requires Zn(2+) as cofactor. In terms of tissue distribution, expressed in the differentiation and elongation zones of primary and lateral roots. Expressed in the hypocotyl, cotyledon and leaf veins, hydathodes and trichomes. In stems, expressed in the vascular cambium region. Expressed in the style, anthers, stamen filaments, vascular tissues of sepals and stigmatic regions in flowers, and abscission, style and stigmatic regions of siliques and seed testa.

The enzyme catalyses (E)-cinnamyl alcohol + NADP(+) = (E)-cinnamaldehyde + NADPH + H(+). The protein operates within aromatic compound metabolism; phenylpropanoid biosynthesis. Functionally, involved in lignin biosynthesis. Catalyzes the final step specific for the production of lignin monomers. Catalyzes the NADPH-dependent reduction of coniferaldehyde, 5-hydroxyconiferaldehyde, sinapaldehyde, 4-coumaraldehyde and caffeyl aldehyde to their respective alcohols. The polypeptide is Cinnamyl alcohol dehydrogenase 7 (CAD7) (Arabidopsis thaliana (Mouse-ear cress)).